Reading from the N-terminus, the 516-residue chain is Endoglucanase 20 (516 aa).

The first 23 residues, Met1–Gly23, serve as a signal peptide directing secretion. An N-linked (GlcNAc...) asparagine glycan is attached at Asn83. The Nucleophile role is filled by Asp93. Residues His416, Asp468, and Glu477 contribute to the active site.

It belongs to the glycosyl hydrolase 9 (cellulase E) family.

Its subcellular location is the secreted. It carries out the reaction Endohydrolysis of (1-&gt;4)-beta-D-glucosidic linkages in cellulose, lichenin and cereal beta-D-glucans.. The polypeptide is Endoglucanase 20 (GLU15) (Oryza sativa subsp. japonica (Rice)).